A 142-amino-acid polypeptide reads, in one-letter code: Thioredoxin-like protein 4A (142 aa).

Cys-38 and Cys-79 form a disulfide bridge. Ser-132 is modified (phosphoserine).

The protein belongs to the DIM1 family. As to quaternary structure, component of the precatalytic spliceosome (spliceosome B complex). Component of the U5 snRNP complex. Component of the U4/U6-U5 tri-snRNP complex. The U4/U6-U5 tri-snRNP complex is a building block of the precatalytic spliceosome (spliceosome B complex). The U4/U6-U5 tri-snRNP complex is composed of the U4, U6 and U5 snRNAs and at least PRPF3, PRPF4, PRPF6, PRPF8, PRPF31, SNRNP200, TXNL4A, SNRNP40, SNRPB, SNRPD1, SNRPD2, SNRPD3, SNRPE, SNRPF, SNRPG, DDX23, CD2BP2, PPIH, SNU13, EFTUD2, SART1 and USP39, plus LSM2, LSM3, LSM4, LSM5, LSM6, LSM7 and LSM8. Directly interacts with CD2BP2. Interacts with HNRPF, HNRPH2, NEDD9 and PQBP1. Interacts with ERBB4. Post-translationally, the disulfide bond seen in structures determined by X-ray crystallography and NMR is not essential for protein folding and function.

The protein resides in the nucleus. Plays a role in pre-mRNA splicing as component of the U5 snRNP and U4/U6-U5 tri-snRNP complexes that are involved in spliceosome assembly, and as component of the precatalytic spliceosome (spliceosome B complex). In Homo sapiens (Human), this protein is Thioredoxin-like protein 4A (TXNL4A).